Here is a 94-residue protein sequence, read N- to C-terminus: Small ribosomal subunit protein uS19 (94 aa).

It belongs to the universal ribosomal protein uS19 family.

In terms of biological role, protein S19 forms a complex with S13 that binds strongly to the 16S ribosomal RNA. In Lactobacillus acidophilus (strain ATCC 700396 / NCK56 / N2 / NCFM), this protein is Small ribosomal subunit protein uS19 (rpsS).